The chain runs to 382 residues: Alkanesulfonate monooxygenase (382 aa).

The protein belongs to the SsuD family.

The catalysed reaction is an alkanesulfonate + FMNH2 + O2 = an aldehyde + FMN + sulfite + H2O + 2 H(+). Functionally, catalyzes the desulfonation of aliphatic sulfonates. This Pseudomonas putida (strain ATCC 47054 / DSM 6125 / CFBP 8728 / NCIMB 11950 / KT2440) protein is Alkanesulfonate monooxygenase.